A 230-amino-acid polypeptide reads, in one-letter code: Leucyl/phenylalanyl-tRNA--protein transferase (230 aa).

It belongs to the L/F-transferase family.

It is found in the cytoplasm. The catalysed reaction is N-terminal L-lysyl-[protein] + L-leucyl-tRNA(Leu) = N-terminal L-leucyl-L-lysyl-[protein] + tRNA(Leu) + H(+). The enzyme catalyses N-terminal L-arginyl-[protein] + L-leucyl-tRNA(Leu) = N-terminal L-leucyl-L-arginyl-[protein] + tRNA(Leu) + H(+). It catalyses the reaction L-phenylalanyl-tRNA(Phe) + an N-terminal L-alpha-aminoacyl-[protein] = an N-terminal L-phenylalanyl-L-alpha-aminoacyl-[protein] + tRNA(Phe). Its function is as follows. Functions in the N-end rule pathway of protein degradation where it conjugates Leu, Phe and, less efficiently, Met from aminoacyl-tRNAs to the N-termini of proteins containing an N-terminal arginine or lysine. In Syntrophotalea carbinolica (strain DSM 2380 / NBRC 103641 / GraBd1) (Pelobacter carbinolicus), this protein is Leucyl/phenylalanyl-tRNA--protein transferase.